Consider the following 198-residue polypeptide: Ribonuclease HII (198 aa).

One can recognise an RNase H type-2 domain in the interval 11-198; it reads NLIAGVDEVG…GPVKRVLGLV (188 aa). Residues aspartate 17, glutamate 18, and aspartate 109 each contribute to the a divalent metal cation site.

The protein belongs to the RNase HII family. It depends on Mn(2+) as a cofactor. Mg(2+) serves as cofactor.

It is found in the cytoplasm. It catalyses the reaction Endonucleolytic cleavage to 5'-phosphomonoester.. Its function is as follows. Endonuclease that specifically degrades the RNA of RNA-DNA hybrids. The sequence is that of Ribonuclease HII from Yersinia pseudotuberculosis serotype O:1b (strain IP 31758).